We begin with the raw amino-acid sequence, 223 residues long: Nitrate reductase gamma chain (223 aa).

Residues 2-27 form a helical membrane-spanning segment; sequence SGQILWGIMPYIVLTIFIGGHIYRYQ. Topologically, residues 28–45 are cytoplasmic; sequence HDQFGWTAKSSELLEKKK. Residues 46 to 68 traverse the membrane as a helical segment; the sequence is LAAGSTLFHWGLLCVVGGHVMGI. Heme b-binding residues include H54 and H64. At 69 to 81 the chain is on the extracellular side; sequence LIPEGVYASLGIS. The helical transmembrane segment at 82–111 threads the bilayer; it reads EHMYHKMAIGAGLPAGIAACTGLVILTYRR. Over 112-123 the chain is Cytoplasmic; that stretch reads LFDKRIRKTSSP. A helical transmembrane segment spans residues 124–147; the sequence is SDILTLLLLLFMMLSGVAATFLNI. Residues 148–180 lie on the Extracellular side of the membrane; the sequence is DSKGFDYRTTVGPWFREIVLFRPDASLMESVPL. A helical transmembrane segment spans residues 181–196; that stretch reads WFKFHIVIGYVVFILW. Heme b-binding residues include H185 and H203. The Cytoplasmic portion of the chain corresponds to 197–223; that stretch reads PFTRLVHVFSLPLKYLTRSYVVYRKRS.

It depends on heme as a cofactor.

It localises to the cell membrane. The catalysed reaction is nitrate + a quinol = a quinone + nitrite + H2O. The gamma chain is a membrane-embedded heme-iron unit resembling cytochrome b, which transfers electrons from quinones to the beta subunit. The polypeptide is Nitrate reductase gamma chain (narI) (Bacillus subtilis (strain 168)).